Reading from the N-terminus, the 87-residue chain is Histone H1.C6/H1.C9 (87 aa).

Residues Met-1–Lys-87 form a disordered region. Positions Ala-11–Lys-87 are enriched in basic residues.

Its subcellular location is the nucleus. It is found in the chromosome. The chain is Histone H1.C6/H1.C9 from Trypanosoma cruzi.